Here is a 369-residue protein sequence, read N- to C-terminus: Glutamine synthetase (369 aa).

Positions 23-102 constitute a GS beta-grasp domain; it reads VIAEYIWVDS…VLAECWNNDG (80 aa). Positions 109–369 constitute a GS catalytic domain; that stretch reads HRHEAAKLFE…MSKEFERESS (261 aa).

This sequence belongs to the glutamine synthetase family. As to quaternary structure, homooctamer.

Its subcellular location is the cytoplasm. It catalyses the reaction L-glutamate + NH4(+) + ATP = L-glutamine + ADP + phosphate + H(+). This chain is Glutamine synthetase (GLN1), found in Eremothecium gossypii (strain ATCC 10895 / CBS 109.51 / FGSC 9923 / NRRL Y-1056) (Yeast).